A 107-amino-acid chain; its full sequence is NADH-quinone oxidoreductase subunit K (107 aa).

3 helical membrane-spanning segments follow: residues 9-29 (IGVNHFLTISVILFGLGMFAV), 36-56 (IVILMGVELILNAANINFLTF), and 68-88 (FSLFVIVLAAAEAAIALAIVI).

This sequence belongs to the complex I subunit 4L family. NDH-1 is composed of 14 different subunits. Subunits NuoA, H, J, K, L, M, N constitute the membrane sector of the complex.

The protein localises to the cell inner membrane. It catalyses the reaction a quinone + NADH + 5 H(+)(in) = a quinol + NAD(+) + 4 H(+)(out). Its function is as follows. NDH-1 shuttles electrons from NADH, via FMN and iron-sulfur (Fe-S) centers, to quinones in the respiratory chain. The immediate electron acceptor for the enzyme in this species is believed to be a menaquinone. Couples the redox reaction to proton translocation (for every two electrons transferred, four hydrogen ions are translocated across the cytoplasmic membrane), and thus conserves the redox energy in a proton gradient. This Chlorobaculum tepidum (strain ATCC 49652 / DSM 12025 / NBRC 103806 / TLS) (Chlorobium tepidum) protein is NADH-quinone oxidoreductase subunit K.